Here is a 166-residue protein sequence, read N- to C-terminus: Large ribosomal subunit protein uL18c (166 aa).

The N-terminal 44 residues, 1 to 44 (MAAATSLSFFHSTLASSSSSSVQQLSLPPKFVNFRPQTLPLIQA), are a transit peptide targeting the chloroplast.

Belongs to the universal ribosomal protein uL18 family. In terms of assembly, component of the chloroplast large ribosomal subunit (LSU). Mature 70S chloroplast ribosomes of higher plants consist of a small (30S) and a large (50S) subunit. The 30S small subunit contains 1 molecule of ribosomal RNA (16S rRNA) and 24 different proteins. The 50S large subunit contains 3 rRNA molecules (23S, 5S and 4.5S rRNA) and 33 different proteins.

The protein resides in the plastid. It is found in the chloroplast. Component of the chloroplast ribosome (chloro-ribosome), a dedicated translation machinery responsible for the synthesis of chloroplast genome-encoded proteins, including proteins of the transcription and translation machinery and components of the photosynthetic apparatus. In Spinacia oleracea (Spinach), this protein is Large ribosomal subunit protein uL18c (RPL18).